The chain runs to 523 residues: Putative glucosylceramidase 1 (523 aa).

Positions 1-23 (MKSRFLLKIFIFLAVFGVDSVRA) are cleaved as a signal peptide. A glycan (N-linked (GlcNAc...) asparagine) is linked at Asn168. Glu358 serves as the catalytic Nucleophile.

This sequence belongs to the glycosyl hydrolase 30 family.

It carries out the reaction a beta-D-glucosylceramide + H2O = an N-acyl-sphingoid base + D-glucose. The catalysed reaction is a beta-D-glucosyl-(1&lt;-&gt;1')-N-acylsphing-4-enine + H2O = an N-acylsphing-4-enine + D-glucose. The enzyme catalyses an N-acyl-1-beta-D-glucosyl-15-methylhexadecasphing-4-enine + H2O = an N-acyl-15-methylhexadecasphing-4-enine + D-glucose. It functions in the pathway lipid metabolism; sphingolipid metabolism. In terms of biological role, glucosylceramidase that catalyzes the hydrolysis of glucosylceramides into free ceramides and glucose. C.elegans contains specific sphingoid bases, which are unique or different in structure compared to the sphingoid bases found in other animals. Two examples of these distinctive compounds are: 15-methylhexadecasphinganine and 15-methylhexadecasphing-4-enine. The sequence is that of Putative glucosylceramidase 1 (gba-1) from Caenorhabditis elegans.